We begin with the raw amino-acid sequence, 416 residues long: Enterobactin exporter EntS (416 aa).

Residues Met1 to Ala21 are Cytoplasmic-facing. The chain crosses the membrane as a helical span at residues Val22–Val42. At Gln43–Gly55 the chain is on the periplasmic side. Residues Leu56–Ala76 traverse the membrane as a helical segment. Topologically, residues Asp77–Lys83 are cytoplasmic. The chain crosses the membrane as a helical span at residues Val84–Leu104. At Leu105–Ser109 the chain is on the periplasmic side. A helical transmembrane segment spans residues Leu110–Ala130. At Leu131–Arg156 the chain is on the cytoplasmic side. A helical membrane pass occupies residues Leu157 to Trp177. Position 178 (Asn178) is a topological domain, periplasmic. A helical membrane pass occupies residues Tyr179 to Leu199. The Cytoplasmic segment spans residues Pro200–Arg218. A helical membrane pass occupies residues Phe219–Ala239. Topologically, residues Ser240–Ser256 are periplasmic. A helical transmembrane segment spans residues Ala257–Thr277. Residues Ser278 to Pro287 lie on the Cytoplasmic side of the membrane. Residues Gly288–Leu307 traverse the membrane as a helical segment. Topologically, residues Met308–Leu313 are periplasmic. A helical membrane pass occupies residues Gly314 to Leu336. The Cytoplasmic portion of the chain corresponds to Gln337–Asn356. Residues Val357–Val377 traverse the membrane as a helical segment. Ala378 is a topological domain (periplasmic). The helical transmembrane segment at Ser379–Val399 threads the bilayer. At Glu400 to Ser416 the chain is on the cytoplasmic side.

Belongs to the major facilitator superfamily. EntS (TC 2.A.1.38) family.

It localises to the cell inner membrane. In terms of biological role, component of an export pathway for enterobactin. The protein is Enterobactin exporter EntS of Escherichia coli (strain 55989 / EAEC).